Here is a 224-residue protein sequence, read N- to C-terminus: Glutathione S-transferase U1 (224 aa).

One can recognise a GST N-terminal domain in the interval 6–85 (ESVKLLGFWA…YIDQTWKNSP (80 aa)). Glutathione contacts are provided by residues 16–17 (SP), 42–43 (NK), 56–57 (KV), and 69–70 (ES). The GST C-terminal domain maps to 90-217 (DPYEKAMARF…EKQIERMTKI (128 aa)). Thr-151 bears the Phosphothreonine mark.

Belongs to the GST superfamily. Tau family.

It localises to the cytoplasm. Its subcellular location is the cytosol. It carries out the reaction RX + glutathione = an S-substituted glutathione + a halide anion + H(+). In terms of biological role, may be involved in the conjugation of reduced glutathione to a wide number of exogenous and endogenous hydrophobic electrophiles and have a detoxification role against certain herbicides. The sequence is that of Glutathione S-transferase U1 (GSTU1) from Arabidopsis thaliana (Mouse-ear cress).